Reading from the N-terminus, the 116-residue chain is Putative pterin-4-alpha-carbinolamine dehydratase (116 aa).

This sequence belongs to the pterin-4-alpha-carbinolamine dehydratase family.

It carries out the reaction (4aS,6R)-4a-hydroxy-L-erythro-5,6,7,8-tetrahydrobiopterin = (6R)-L-erythro-6,7-dihydrobiopterin + H2O. In Paracidovorax citrulli (strain AAC00-1) (Acidovorax citrulli), this protein is Putative pterin-4-alpha-carbinolamine dehydratase.